Here is a 310-residue protein sequence, read N- to C-terminus: MNDIRSRKIAVLMGGLSAEREVSLASGAAVCQALVARGFDALSVDVARDLPLVLSREGIGAAFIALHGRYGEDGCVQGLLELMAIPYTGSGVLASALAMHKLYSKQAFVSAGILTAPFHHFRRGERVSLSHLSFGLPLVVKPVQEGSSVGISIVKEESQLAAAVKLAFRHDDEILVEQFIKGQEVQVGILDDRPMGAIEIVSRNEFYDFEAKYTDGMAEHFFPARLEKGLYEEALRVGLAAHHALGCRCYSRVDLLVTPAGECYVLEVNTLPGMTALSLLPEIAAKGADLPFEELVERIILSADLSVKTG.

Residues 105 to 301 form the ATP-grasp domain; sequence KQAFVSAGIL…FEELVERIIL (197 aa). 133 to 186 lines the ATP pocket; that stretch reads SFGLPLVVKPVQEGSSVGISIVKEESQLAAAVKLAFRHDDEILVEQFIKGQEVQ. The Mg(2+) site is built by Asp254, Glu267, and Asn269.

Belongs to the D-alanine--D-alanine ligase family. Mg(2+) is required as a cofactor. Mn(2+) serves as cofactor.

The protein resides in the cytoplasm. It catalyses the reaction 2 D-alanine + ATP = D-alanyl-D-alanine + ADP + phosphate + H(+). The protein operates within cell wall biogenesis; peptidoglycan biosynthesis. Cell wall formation. This chain is D-alanine--D-alanine ligase, found in Pelobacter propionicus (strain DSM 2379 / NBRC 103807 / OttBd1).